The sequence spans 1223 residues: ATP-dependent DNA helicase P143 (1223 aa).

The short motif at 692–701 is the Nuclear localization signal element; the sequence is RKCRCVQKIK. Residue 919–926 coordinates ATP; it reads GVPLSGKS. The segment at residues 967–981 is a DNA-binding region (H-T-H motif); the sequence is TINELKKCSESFFKK.

It is found in the host nucleus. The enzyme catalyses ATP + H2O = ADP + phosphate + H(+). In terms of biological role, essential for the initiation of viral DNA replication, it may contribute to other functions such as controlling the switch to the late phase and leading to the inhibition of host protein synthesis. Required for late and very late gene expression. This Orgyia pseudotsugata multicapsid polyhedrosis virus (OpMNPV) protein is ATP-dependent DNA helicase P143 (P143).